Reading from the N-terminus, the 169-residue chain is MVEPTGIEDVQEYDENSEEYPAEYTTETPETVGETYIPTAVGPSLGTGRRKTAVARVRVVPGTGEWKINGKSLEEYFPNKVHQQLIKEPLATLGFEGAYDVFARLNGGGTSGQAGALRHGLARALAAMDPEHNRPPLKKAGFLTRDARKVERKKAGLKKARKAPQYSKR.

Disordered stretches follow at residues 1 to 29 (MVEP…TETP) and 128 to 169 (MDPE…YSKR). Positions 9-21 (DVQEYDENSEEYP) are enriched in acidic residues. Basic residues predominate over residues 150–169 (VERKKAGLKKARKAPQYSKR).

The protein belongs to the universal ribosomal protein uS9 family.

The chain is Small ribosomal subunit protein uS9 from Thermobifida fusca (strain YX).